The chain runs to 491 residues: Glutamate--tRNA ligase (491 aa).

The 'HIGH' region signature appears at 13–23 (PSPTGFLHIGN). Zn(2+)-binding residues include C110, C112, C137, and H139. Residues 254-258 (KLSKR) carry the 'KMSKS' region motif. K257 is a binding site for ATP.

The protein belongs to the class-I aminoacyl-tRNA synthetase family. Glutamate--tRNA ligase type 1 subfamily. As to quaternary structure, monomer. Requires Zn(2+) as cofactor.

Its subcellular location is the cytoplasm. It carries out the reaction tRNA(Glu) + L-glutamate + ATP = L-glutamyl-tRNA(Glu) + AMP + diphosphate. Catalyzes the attachment of glutamate to tRNA(Glu) in a two-step reaction: glutamate is first activated by ATP to form Glu-AMP and then transferred to the acceptor end of tRNA(Glu). The chain is Glutamate--tRNA ligase from Listeria monocytogenes serotype 4b (strain F2365).